The chain runs to 117 residues: Crustacean hyperglycemic hormones 3 (117 aa).

An N-terminal signal peptide occupies residues 1–24; that stretch reads MVTPRMLSALSAVLLLVLTASSSA. Disulfide bonds link Cys50–Cys86, Cys66–Cys82, and Cys69–Cys95. Val115 carries the post-translational modification Valine amide.

It belongs to the arthropod CHH/MIH/GIH/VIH hormone family. In terms of tissue distribution, produced by the medulla terminalis X-organ in the eyestalks and transported to the sinus gland where they are stored and released.

The protein resides in the secreted. In terms of biological role, hormone found in the sinus gland of isopods and decapods which controls the blood sugar level. Has a secretagogue action over the amylase released from the midgut gland. May act as a stress hormone and may be involved in the control of molting and reproduction. The chain is Crustacean hyperglycemic hormones 3 from Penaeus japonicus (Kuruma prawn).